Here is a 140-residue protein sequence, read N- to C-terminus: MAPLLLVLWASLVSMELTGGMMVNEVPAQNLSCFECFKVLQASKCHPIECRPNEKVCVSNEVLLYTSTKRRTQISKRCATACPNSNNVIEWSLGNTQARITRRCCSGDRCNRAPGSWEGFWSLPGRLLLPMGLGLFCTLL.

A signal peptide spans 1 to 20 (MAPLLLVLWASLVSMELTGG). In terms of domain architecture, UPAR/Ly6 spans 31–124 (LSCFECFKVL…GSWEGFWSLP (94 aa)). Disulfide bonds link Cys33-Cys50 and Cys105-Cys110. A lipid anchor (GPI-anchor amidated serine) is attached at Ser116. Residues 117 to 140 (WEGFWSLPGRLLLPMGLGLFCTLL) constitute a propeptide, removed in mature form.

It is found in the cell membrane. This Mus musculus (Mouse) protein is Lymphocyte antigen 6L.